The chain runs to 147 residues: Small ribosomal subunit protein eS19 (147 aa).

The protein belongs to the eukaryotic ribosomal protein eS19 family. Component of the small ribosomal subunit.

It localises to the cytoplasm. Its subcellular location is the nucleus. In terms of biological role, component of the small ribosomal subunit. The ribosome is a large ribonucleoprotein complex responsible for the synthesis of proteins in the cell. Required for pre-rRNA processing and maturation of 40S ribosomal subunits. This Gillichthys mirabilis (Long-jawed mudsucker) protein is Small ribosomal subunit protein eS19 (rps19).